The chain runs to 309 residues: 11-beta-hydroxysteroid dehydrogenase-like 3 (309 aa).

A helical; Signal-anchor for type II membrane protein membrane pass occupies residues 10-30 (LLLPPLTIIFLFLFYPFYLLI). Residues 54–80 (GASS…VARR) and D105 each bind NADP(+). S184 is a binding site for substrate. Catalysis depends on Y197, which acts as the Proton acceptor. NADP(+) contacts are provided by residues 197-201 (YAASK) and K201.

This sequence belongs to the short-chain dehydrogenases/reductases (SDR) family.

It localises to the membrane. In Arabidopsis thaliana (Mouse-ear cress), this protein is 11-beta-hydroxysteroid dehydrogenase-like 3 (HSD3).